A 72-amino-acid chain; its full sequence is Translation initiation factor IF-1 (72 aa).

Residues 1 to 72 enclose the S1-like domain; that stretch reads MAKEDVIEIE…TRGRITYRFK (72 aa).

It belongs to the IF-1 family. Component of the 30S ribosomal translation pre-initiation complex which assembles on the 30S ribosome in the order IF-2 and IF-3, IF-1 and N-formylmethionyl-tRNA(fMet); mRNA recruitment can occur at any time during PIC assembly.

The protein resides in the cytoplasm. Its function is as follows. One of the essential components for the initiation of protein synthesis. Stabilizes the binding of IF-2 and IF-3 on the 30S subunit to which N-formylmethionyl-tRNA(fMet) subsequently binds. Helps modulate mRNA selection, yielding the 30S pre-initiation complex (PIC). Upon addition of the 50S ribosomal subunit IF-1, IF-2 and IF-3 are released leaving the mature 70S translation initiation complex. The protein is Translation initiation factor IF-1 of Streptococcus mutans serotype c (strain ATCC 700610 / UA159).